The chain runs to 274 residues: Diaminopimelate epimerase (274 aa).

Residues Asn-11, Gln-44, and Asn-64 each coordinate substrate. The active-site Proton donor is the Cys-73. Substrate contacts are provided by residues 74–75 (GN), Asn-157, Asn-190, and 208–209 (ER). Cys-217 (proton acceptor) is an active-site residue. 218-219 (GS) contributes to the substrate binding site.

This sequence belongs to the diaminopimelate epimerase family. As to quaternary structure, homodimer.

It localises to the cytoplasm. The catalysed reaction is (2S,6S)-2,6-diaminopimelate = meso-2,6-diaminopimelate. It functions in the pathway amino-acid biosynthesis; L-lysine biosynthesis via DAP pathway; DL-2,6-diaminopimelate from LL-2,6-diaminopimelate: step 1/1. In terms of biological role, catalyzes the stereoinversion of LL-2,6-diaminopimelate (L,L-DAP) to meso-diaminopimelate (meso-DAP), a precursor of L-lysine and an essential component of the bacterial peptidoglycan. This Yersinia pseudotuberculosis serotype O:1b (strain IP 31758) protein is Diaminopimelate epimerase.